The sequence spans 715 residues: Polyribonucleotide nucleotidyltransferase (715 aa).

Asp500 and Asp506 together coordinate Mg(2+). Positions 567–634 constitute a KH domain; that stretch reads PKVKMIRINP…AYIESLVREA (68 aa). The 76-residue stretch at 637 to 712 folds into the S1 motif domain; that stretch reads GELYEAKVTR…ERGRVDLSRK (76 aa).

It belongs to the polyribonucleotide nucleotidyltransferase family. Mg(2+) is required as a cofactor.

The protein resides in the cytoplasm. It catalyses the reaction RNA(n+1) + phosphate = RNA(n) + a ribonucleoside 5'-diphosphate. In terms of biological role, involved in mRNA degradation. Catalyzes the phosphorolysis of single-stranded polyribonucleotides processively in the 3'- to 5'-direction. In Acholeplasma laidlawii (strain PG-8A), this protein is Polyribonucleotide nucleotidyltransferase.